We begin with the raw amino-acid sequence, 632 residues long: Phospholipid:diacylglycerol acyltransferase (632 aa).

Positions 1-15 are enriched in basic residues; that stretch reads MASSKKSKTHKKKKE. Residues 1–47 form a disordered region; it reads MASSKKSKTHKKKKEVKSPIDLPNSKKPTRALSEQPSASETQSVSNK. At 1-56 the chain is on the cytoplasmic side; that stretch reads MASSKKSKTHKKKKEVKSPIDLPNSKKPTRALSEQPSASETQSVSNKSRKSKFGKR. Residues 32 to 46 are compositionally biased toward polar residues; that stretch reads LSEQPSASETQSVSN. Residues 57-77 form a helical membrane-spanning segment; the sequence is LNFILGAILGICGAFFFAVGD. Topologically, residues 78-632 are lumenal; that stretch reads DNAVFDPATL…NEINLDKPRN (555 aa). Substrate is bound at residue aspartate 136. The active-site Acyl-ester intermediate is serine 293. Methionine 294 contacts substrate. Active-site charge relay system residues include aspartate 535 and histidine 586.

The protein belongs to the AB hydrolase superfamily. Lipase family.

Its subcellular location is the endoplasmic reticulum membrane. The catalysed reaction is a glycerophospholipid + a 1,2-diacyl-sn-glycerol = a monoacylglycerophospholipid + a triacyl-sn-glycerol. It functions in the pathway glycerolipid metabolism; triacylglycerol biosynthesis. In terms of biological role, catalyzes triacylglycerol (TAG) formation by an acyl-CoA independent pathway. The enzyme specifically transfers acyl groups from the sn-2 position of a phospholipid to diacylglycerol (DAG), thus forming an sn-1-lysophospholipid. Plays a major role in triacylglycerol formation at log phase. Involved in lipid particle synthesis from the endoplasmic reticulum, promoting localized TAG production at discrete ER subdomains. This chain is Phospholipid:diacylglycerol acyltransferase (plh1), found in Schizosaccharomyces pombe (strain 972 / ATCC 24843) (Fission yeast).